The following is a 331-amino-acid chain: Glyceraldehyde-3-phosphate dehydrogenase (331 aa).

NAD(+)-binding positions include 12–13, Asp34, Arg78, and Thr120; that span reads RI. N6-acetyllysine occurs at positions 132 and 138. D-glyceraldehyde 3-phosphate contacts are provided by residues 149-151 and Thr180; that span reads SCT. Cys150 serves as the catalytic Nucleophile. Lys192 carries the N6-acetyllysine modification. Residues 209-210 and Arg232 contribute to the D-glyceraldehyde 3-phosphate site; that span reads TG. N6-acetyllysine is present on Lys249. An NAD(+)-binding site is contributed by Asn314.

The protein belongs to the glyceraldehyde-3-phosphate dehydrogenase family. As to quaternary structure, homotetramer.

The protein localises to the cytoplasm. The enzyme catalyses D-glyceraldehyde 3-phosphate + phosphate + NAD(+) = (2R)-3-phospho-glyceroyl phosphate + NADH + H(+). It participates in carbohydrate degradation; glycolysis; pyruvate from D-glyceraldehyde 3-phosphate: step 1/5. In terms of biological role, catalyzes the oxidative phosphorylation of glyceraldehyde 3-phosphate (G3P) to 1,3-bisphosphoglycerate (BPG) using the cofactor NAD. The first reaction step involves the formation of a hemiacetal intermediate between G3P and a cysteine residue, and this hemiacetal intermediate is then oxidized to a thioester, with concomitant reduction of NAD to NADH. The reduced NADH is then exchanged with the second NAD, and the thioester is attacked by a nucleophilic inorganic phosphate to produce BPG. This chain is Glyceraldehyde-3-phosphate dehydrogenase (gapA), found in Escherichia coli O6:H1 (strain CFT073 / ATCC 700928 / UPEC).